A 237-amino-acid chain; its full sequence is Putative N-acetylmuramoyl-L-alanine amidase (237 aa).

Residues 7 to 225 (ILIDAGHGGY…IANSIYLGLK (219 aa)) enclose the MurNAc-LAA domain.

The protein belongs to the N-acetylmuramoyl-L-alanine amidase 3 family.

The protein localises to the secreted. It catalyses the reaction Hydrolyzes the link between N-acetylmuramoyl residues and L-amino acid residues in certain cell-wall glycopeptides.. Its function is as follows. Cell-wall hydrolase involved in septum cleavage during cell division. This chain is Putative N-acetylmuramoyl-L-alanine amidase (amiB), found in Buchnera aphidicola subsp. Acyrthosiphon pisum (strain APS) (Acyrthosiphon pisum symbiotic bacterium).